A 511-amino-acid chain; its full sequence is Voltage-gated potassium channel KCNC1 (511 aa).

The Cytoplasmic segment spans residues 1-190 (MGQGDESERI…EDPYSSRYAR (190 aa)). At Ser44 the chain carries Phosphoserine. Positions 77, 83, 104, and 105 each coordinate Zn(2+). Positions 121–147 (SFGGAPLDNSADDADADGPGDSGDGED) are disordered. Residues Ser130, Ser142, Ser158, and Ser160 each carry the phosphoserine modification. Acidic residues predominate over residues 130–147 (SADDADADGPGDSGDGED). A helical transmembrane segment spans residues 191–209 (YVAFASLFFILVSITTFCL). 2 N-linked (GlcNAc...) asparagine glycosylation sites follow: Asn220 and Asn229. A helical membrane pass occupies residues 248-267 (IEGVCVVWFTFEFLMRVVFC). Over 268–276 (PNKVEFIKN) the chain is Cytoplasmic. A helical transmembrane segment spans residues 277 to 295 (SLNIIDFVAILPFYLEVGL). A helical; Voltage-sensor membrane pass occupies residues 309–331 (FLRVVRFVRILRIFKLTRHFVGL). Over 332 to 344 (RVLGHTLRASTNE) the chain is Cytoplasmic. The helical transmembrane segment at 345 to 366 (FLLLIIFLALGVLIFATMIYYA) threads the bilayer. K(+) is bound by residues Thr400, Leu401, Gly402, and Tyr403. A Selectivity filter motif is present at residues 400-405 (TLGYGD). A helical transmembrane segment spans residues 415–436 (LVGALCALAGVLTIAMPVPVIV). Residues 437-511 (NNFGMYYSLA…GRKPLRGMSI (75 aa)) lie on the Cytoplasmic side of the membrane. Position 474 is a phosphoserine (Ser474). Thr483 carries the post-translational modification Phosphothreonine.

This sequence belongs to the potassium channel family. C (Shaw) (TC 1.A.1.2) subfamily. Kv3.1/KCNC1 sub-subfamily. As to quaternary structure, homotetramer. Homomultimer. Heteromultimer with KCNG3, KCNG4 and KCNV2. Heteromultimer with KCNC2. Heterotetramer with KCNC3. Interacts with the ancillary subunits KCNE1 and KCNE2; the interaction modulates channel activity. Post-translationally, N-glycosylated; contains sialylated glycans. As to expression, detected in cerebellum. Detected in brain (at protein level). Detected in brain.

The protein resides in the cell membrane. It is found in the cell projection. The protein localises to the axon. It localises to the presynaptic cell membrane. It carries out the reaction K(+)(in) = K(+)(out). Functionally, voltage-gated potassium channel that opens in response to the voltage difference across the membrane and through which potassium ions pass in accordance with their electrochemical gradient. The mechanism is time-dependent and inactivation is slow. Plays an important role in the rapid repolarization of fast-firing brain neurons. Can form functional homotetrameric channels and heterotetrameric channels that contain variable proportions of KCNC2, and possibly other family members as well. Contributes to fire sustained trains of very brief action potentials at high frequency in pallidal neurons. The sequence is that of Voltage-gated potassium channel KCNC1 from Mus musculus (Mouse).